The sequence spans 214 residues: Phosphoribosylglycinamide formyltransferase (214 aa).

Residue Gly-12 to Asn-14 participates in N(1)-(5-phospho-beta-D-ribosyl)glycinamide binding. (6R)-10-formyltetrahydrofolate contacts are provided by residues Leu-105–Leu-108 and Asn-123. His-125 acts as the Proton donor in catalysis. Asp-167 is a (6R)-10-formyltetrahydrofolate binding site. A N(1)-(5-phospho-beta-D-ribosyl)glycinamide-binding site is contributed by Glu-197.

The protein belongs to the GART family.

It catalyses the reaction N(1)-(5-phospho-beta-D-ribosyl)glycinamide + (6R)-10-formyltetrahydrofolate = N(2)-formyl-N(1)-(5-phospho-beta-D-ribosyl)glycinamide + (6S)-5,6,7,8-tetrahydrofolate + H(+). Its pathway is purine metabolism; IMP biosynthesis via de novo pathway; N(2)-formyl-N(1)-(5-phospho-D-ribosyl)glycinamide from N(1)-(5-phospho-D-ribosyl)glycinamide (10-formyl THF route): step 1/1. The polypeptide is Phosphoribosylglycinamide formyltransferase (Saccharomyces cerevisiae (strain ATCC 204508 / S288c) (Baker's yeast)).